The chain runs to 387 residues: Succinate--CoA ligase [ADP-forming] subunit beta (387 aa).

Residues lysine 9–lysine 236 enclose the ATP-grasp domain. ATP contacts are provided by residues lysine 45, glycine 52 to glycine 54, serine 94, and glutamate 99. Asparagine 191 and aspartate 205 together coordinate Mg(2+). Substrate contacts are provided by residues asparagine 256 and glycine 318–threonine 320.

This sequence belongs to the succinate/malate CoA ligase beta subunit family. As to quaternary structure, heterotetramer of two alpha and two beta subunits. The cofactor is Mg(2+).

The enzyme catalyses succinate + ATP + CoA = succinyl-CoA + ADP + phosphate. It catalyses the reaction GTP + succinate + CoA = succinyl-CoA + GDP + phosphate. Its pathway is carbohydrate metabolism; tricarboxylic acid cycle; succinate from succinyl-CoA (ligase route): step 1/1. Succinyl-CoA synthetase functions in the citric acid cycle (TCA), coupling the hydrolysis of succinyl-CoA to the synthesis of either ATP or GTP and thus represents the only step of substrate-level phosphorylation in the TCA. The beta subunit provides nucleotide specificity of the enzyme and binds the substrate succinate, while the binding sites for coenzyme A and phosphate are found in the alpha subunit. The protein is Succinate--CoA ligase [ADP-forming] subunit beta of Mycobacterium tuberculosis (strain CDC 1551 / Oshkosh).